A 639-amino-acid polypeptide reads, in one-letter code: Wall-associated receptor kinase-like 15 (639 aa).

The first 25 residues, 1–25 (MELPWLSLTTFTLSLLIYFSSTTQA), serve as a signal peptide directing secretion. Residues 26-282 (FKRCPNCGST…KRKSCKRWSN (257 aa)) are Extracellular-facing. N-linked (GlcNAc...) asparagine glycosylation is found at asparagine 68, asparagine 115, asparagine 126, asparagine 141, and asparagine 241. A helical membrane pass occupies residues 283 to 303 (LPLLGGLAGGVGAILIAGFIT). Residues 304 to 639 (KTIVSKQNRR…KEIENILHGI (336 aa)) lie on the Cytoplasmic side of the membrane. A Protein kinase domain is found at 354 to 639 (FAKSNLLGFG…KEIENILHGI (286 aa)). Residues 360-368 (LGFGGFGEV) and lysine 382 each bind ATP. Aspartate 484 serves as the catalytic Proton acceptor.

The protein belongs to the protein kinase superfamily. Ser/Thr protein kinase family.

The protein resides in the membrane. The enzyme catalyses L-seryl-[protein] + ATP = O-phospho-L-seryl-[protein] + ADP + H(+). The catalysed reaction is L-threonyl-[protein] + ATP = O-phospho-L-threonyl-[protein] + ADP + H(+). Functionally, putative serine/threonine-protein kinase that may function as a signaling receptor of extracellular matrix component. This is Wall-associated receptor kinase-like 15 (WAKL15) from Arabidopsis thaliana (Mouse-ear cress).